A 1975-amino-acid polypeptide reads, in one-letter code: Cadherin-87A (1975 aa).

The N-terminal stretch at 1–17 (MKLPLGLLMICLGLTLA) is a signal peptide. Topologically, residues 18–1775 (KGETNLPPVF…AIVQDEFDLA (1758 aa)) are extracellular. Cadherin domains lie at 28–132 (TQTL…PPEF), 133–245 (QNTP…PPVF), 246–358 (QGSL…PPVF), 359–472 (NHKE…KPVF), 473–669 (EQES…PPVC), 670–774 (ESPL…VPNF), 775–878 (EQQS…DPYF), 879–998 (VPAT…PPRF), 999–1103 (NAPW…DPKF), 1104–1211 (SQSD…APVF), 1212–1318 (TRDV…KPEF), 1319–1431 (VIPA…RPEF), 1432–1553 (PDAS…PPVF), and 1554–1677 (EKPI…PPEE). 3 N-linked (GlcNAc...) asparagine glycosylation sites follow: N39, N77, and N203. A glycan (N-linked (GlcNAc...) asparagine) is linked at N424. The disordered stretch occupies residues 535–560 (CHDNGESNRRERRDLNEDEHVEEDDG). Residues 537-549 (DNGESNRRERRDL) are compositionally biased toward basic and acidic residues. Residues 550–560 (NEDEHVEEDDG) show a composition bias toward acidic residues. N730 and N761 each carry an N-linked (GlcNAc...) asparagine glycan. Residues N1039, N1049, N1111, N1163, N1217, N1325, N1349, N1492, N1576, and N1691 are each glycosylated (N-linked (GlcNAc...) asparagine). A helical transmembrane segment spans residues 1776 to 1796 (VAGLVALVIVLFVGVISFIVL). The Cytoplasmic portion of the chain corresponds to 1797-1975 (CCCLKHWNLS…DGDDAVAELI (179 aa)). Polar residues predominate over residues 1887–1899 (YATIQPRNNQNRL). The interval 1887–1916 (YATIQPRNNQNRLTGGGGAGGGSMRSGGGA) is disordered. Over residues 1900–1916 (TGGGGAGGGSMRSGGGA) the composition is skewed to gly residues.

The protein localises to the cell membrane. In terms of biological role, cadherins are calcium-dependent cell adhesion proteins. They preferentially interact with themselves in a homophilic manner in connecting cells. This is Cadherin-87A (Cad87A) from Drosophila melanogaster (Fruit fly).